The chain runs to 858 residues: Lysine-specific demethylase JMJ706 (858 aa).

Positions 103–144 (CPVYYPTKEEFEDPIGYIQKIAPVASKYGICKIVSPVSASVP) constitute a JmjN domain. Residues 250–420 (KSNWNLKNFS…LGSVASRRYA (171 aa)) form the JmjC domain. 3 residues coordinate Fe cation: His-293, Glu-295, and His-388. The segment covering 737–746 (QHNKRPEDYG) has biased composition (basic and acidic residues). Disordered regions lie at residues 737–791 (QHNK…SAKQ) and 829–858 (SSST…WPAI). Over residues 829-844 (SSSTNRVVEQGSSGQR) the composition is skewed to polar residues.

It depends on Fe(2+) as a cofactor.

The protein localises to the nucleus. It carries out the reaction N(6),N(6),N(6)-trimethyl-L-lysyl(9)-[histone H3] + 2 2-oxoglutarate + 2 O2 = N(6)-methyl-L-lysyl(9)-[histone H3] + 2 formaldehyde + 2 succinate + 2 CO2. Histone demethylase that demethylates 'Lys-9' (H3K9me) of histone H3 with a specific activity for H3K9me3 and H3K9me2. No activity on H3K4me3, H3K9me1, H3K27me2 and H3K36me3/2. Involved in the control of floral organ development by demethylating H3K9me3 and H3K9me2 in the promoter regions of DH1 and MADS47. The 'Lys-9' demethylation of these two genes is required for induction of their expression. The polypeptide is Lysine-specific demethylase JMJ706 (JMJ706) (Oryza sativa subsp. japonica (Rice)).